The primary structure comprises 113 residues: Transcriptional regulator RamA (113 aa).

The HTH araC/xylS-type domain maps to 9–107 (DTIVEWIDDN…NLPPGAYRKE (99 aa)). 2 DNA-binding regions (H-T-H motif) span residues 26-47 (DDIA…MQYK) and 74-97 (VYDI…TRTF).

Transcriptional regulator. Binds to regulatory regions of target genes, including efflux pump operon acrAB and outer membrane protein gene tolC. Represses transcription of genes belonging to the flagellar regulon, including flhD, flhB and fliC; probably thereby leading to repression of motility. Represses expression of the flhDC operon in a post-transcriptional manner. Activates expression of acrAB, perhaps thereby conferring multidrug resistance. Involved in indole- and bile-mediated regulation of acrAB; binding of bile to RamA may contribute to activation of expression of acrAB. Plays a role in regulating virulence in mice. In Salmonella typhimurium (strain LT2 / SGSC1412 / ATCC 700720), this protein is Transcriptional regulator RamA.